Consider the following 286-residue polypeptide: Inositol polyphosphate multikinase alpha (286 aa).

Positions 1–22 (MQLKVPEHQVAGHIAKDGKPGP) are disordered.

This sequence belongs to the inositol phosphokinase (IPK) family. Post-translationally, phosphorylated. Detected in leaves, stems, roots, siliques and flowers. Highly expressed in root tissues, anthers, the stigma, pollen grains and growing pollen tubes.

The protein localises to the nucleus. Its subcellular location is the cell membrane. It catalyses the reaction 1D-myo-inositol 1,4,5-trisphosphate + 2 ATP = 1D-myo-inositol 1,3,4,5,6-pentakisphosphate + 2 ADP + 2 H(+). The catalysed reaction is 1D-myo-inositol 1,3,4,6-tetrakisphosphate + ATP = 1D-myo-inositol 1,3,4,5,6-pentakisphosphate + ADP + H(+). Functionally, inositol phosphate kinase with a broad substrate specificity. Phosphorylates inositol 1,4,5-trisphosphate (Ins(1,4,5)P3), inositol 1,4,5,6-tetrakisphosphate (Ins(1,4,5,6)P4), inositol 1,3,4,5-tetrakisphosphate (Ins(1,3,4,5)P4), inositol 1,3,4,6-tetrakisphosphate (Ins(1,3,4,6)P4) and inositol 1,2,3,4,6-pentakisphosphate (Ins(1,2,3,4,6)P5) but not inositol 1,4-bisphosphate (Ins(1,4)P2), inositol 1,3,4-trisphosphate (Ins(1,3,4)P3), inositol 1,2,6-trisphosphate (Ins(1,2,6)P3), inositol 3,4,5,6-tetrakisphosphate (Ins(3,4,5,6)P4), inositol 1,3,4,5,6-pentakisphosphate (Ins(1,3,4,5,6)P5), inositol 1,2,4,5,6-pentakisphosphate (Ins(1,2,4,5,6)P5) or inositol hexakisphosphate (InsP6). Regulates pollen and root development probably through the regulation of InsP3-mediated calcium accumulation. This Arabidopsis thaliana (Mouse-ear cress) protein is Inositol polyphosphate multikinase alpha (IPK2a).